Consider the following 471-residue polypeptide: UDP-N-acetylmuramate--L-alanine ligase (471 aa).

Gly114–Thr120 serves as a coordination point for ATP.

Belongs to the MurCDEF family.

The protein localises to the cytoplasm. The catalysed reaction is UDP-N-acetyl-alpha-D-muramate + L-alanine + ATP = UDP-N-acetyl-alpha-D-muramoyl-L-alanine + ADP + phosphate + H(+). It functions in the pathway cell wall biogenesis; peptidoglycan biosynthesis. Its function is as follows. Cell wall formation. The protein is UDP-N-acetylmuramate--L-alanine ligase of Brucella abortus (strain S19).